The primary structure comprises 711 residues: Ribosomal RNA large subunit methyltransferase K/L (711 aa).

Residues 42–153 enclose the THUMP domain; the sequence is DAQRAVLWSR…KGRATISVDL (112 aa).

Belongs to the methyltransferase superfamily. RlmKL family.

It localises to the cytoplasm. The catalysed reaction is guanosine(2445) in 23S rRNA + S-adenosyl-L-methionine = N(2)-methylguanosine(2445) in 23S rRNA + S-adenosyl-L-homocysteine + H(+). It catalyses the reaction guanosine(2069) in 23S rRNA + S-adenosyl-L-methionine = N(2)-methylguanosine(2069) in 23S rRNA + S-adenosyl-L-homocysteine + H(+). Specifically methylates the guanine in position 2445 (m2G2445) and the guanine in position 2069 (m7G2069) of 23S rRNA. This chain is Ribosomal RNA large subunit methyltransferase K/L, found in Xanthomonas oryzae pv. oryzae (strain MAFF 311018).